Here is a 123-residue protein sequence, read N- to C-terminus: MKKKGFQRSDRVAEQVRRDLADLIRTELKDPRVGMISLTAVELTPDYAHAKVFFATLNSEHLEEVERGLKRAAGFLRRELGKRIHIHTLPELHFVYDSSIERGASLSLLIDQANALSDQTPEE.

The protein belongs to the RbfA family. Monomer. Binds 30S ribosomal subunits, but not 50S ribosomal subunits or 70S ribosomes.

Its subcellular location is the cytoplasm. One of several proteins that assist in the late maturation steps of the functional core of the 30S ribosomal subunit. Associates with free 30S ribosomal subunits (but not with 30S subunits that are part of 70S ribosomes or polysomes). Required for efficient processing of 16S rRNA. May interact with the 5'-terminal helix region of 16S rRNA. The chain is Ribosome-binding factor A from Dechloromonas aromatica (strain RCB).